The chain runs to 588 residues: Dual specificity tyrosine-phosphorylation-regulated kinase 3 (588 aa).

The tract at residues 1 to 188 (MGGTARGPGR…HGVIGGPNNG (188 aa)) is disordered. Over residues 97-134 (SNTIQSDGISDSEKCSPTVSQGKSSDCLNTVKSNSSSK) the composition is skewed to polar residues. A Protein kinase domain is found at 209–522 (YEVLKIIGKG…PAQALRHPWI (314 aa)). ATP is bound by residues 215–223 (IGKGSFGQV), K238, and 288–291 (FELL). D335 serves as the catalytic Proton acceptor. S350 is subject to Phosphoserine. Y369 carries the phosphotyrosine modification. Positions 468-481 (RSRRGKKRGPPGSK) match the Nuclear localization signal motif.

It belongs to the protein kinase superfamily. CMGC Ser/Thr protein kinase family. MNB/DYRK subfamily. Interacts with SIRT1. It depends on Mg(2+) as a cofactor. Ubiquitinated at anaphase by the anaphase-promoting complex (APC/C), leading to its degradation by the proteasome. In terms of processing, protein kinase activity is activated following autophosphorylation at Tyr-369. Autophosphorylation at Ser-350 stabilizes the protein and enhances the protein kinase activity. Isoform 1: Highly expressed in testis and in hematopoietic tissue such as fetal liver, and bone marrow. Isoform 1: Predominant form in fetal liver and bone marrow. Isoform 1: Present at low levels in heart, pancreas, lymph node and thymus. Isoform 2: Highly expressed in testis and in hematopoietic tissue such as fetal liver, and bone marrow. Isoform 2: Predominant form in testis. Isoform 2: Present at low levels in heart, pancreas, lymph node and thymus.

The protein localises to the nucleus. The protein resides in the cytoplasm. It is found in the nucleus speckle. It localises to the cytoplasmic granule. Its subcellular location is the cytoskeleton. The protein localises to the microtubule organizing center. The protein resides in the centrosome. The catalysed reaction is L-seryl-[protein] + ATP = O-phospho-L-seryl-[protein] + ADP + H(+). It carries out the reaction L-threonyl-[protein] + ATP = O-phospho-L-threonyl-[protein] + ADP + H(+). It catalyses the reaction L-tyrosyl-[protein] + ATP = O-phospho-L-tyrosyl-[protein] + ADP + H(+). Protein kinase activity is activated following autophosphorylation at Tyr-369. Inhibited by harmine, an ATP competitive inhibitor. Inhibited by small-compound GSK-626616. In terms of biological role, dual-specificity protein kinase that promotes disassembly of several types of membraneless organelles during mitosis, such as stress granules, nuclear speckles and pericentriolar material. Dual-specificity tyrosine-regulated kinases (DYRKs) autophosphorylate a critical tyrosine residue in their activation loop and phosphorylate their substrate on serine and threonine residues. Acts as a central dissolvase of membraneless organelles during the G2-to-M transition, after the nuclear-envelope breakdown: acts by mediating phosphorylation of multiple serine and threonine residues in unstructured domains of proteins, such as SRRM1 and PCM1. Does not mediate disassembly of all membraneless organelles: disassembly of P-body and nucleolus is not regulated by DYRK3. Dissolution of membraneless organelles at the onset of mitosis is also required to release mitotic regulators, such as ZNF207, from liquid-unmixed organelles where they are sequestered and keep them dissolved during mitosis. Regulates mTORC1 by mediating the dissolution of stress granules: during stressful conditions, DYRK3 partitions from the cytosol to the stress granule, together with mTORC1 components, which prevents mTORC1 signaling. When stress signals are gone, the kinase activity of DYRK3 is required for the dissolution of stress granule and mTORC1 relocation to the cytosol: acts by mediating the phosphorylation of the mTORC1 inhibitor AKT1S1, allowing full reactivation of mTORC1 signaling. Also acts as a negative regulator of EPO-dependent erythropoiesis: may place an upper limit on red cell production during stress erythropoiesis. Inhibits cell death due to cytokine withdrawal in hematopoietic progenitor cells. Promotes cell survival upon genotoxic stress through phosphorylation of SIRT1: this in turn inhibits p53/TP53 activity and apoptosis. The polypeptide is Dual specificity tyrosine-phosphorylation-regulated kinase 3 (Homo sapiens (Human)).